Reading from the N-terminus, the 246-residue chain is E3 ubiquitin-protein ligase MARCHF2 (246 aa).

Residues 56-116 (GTQSDGPICR…ELCHTEFAVE (61 aa)) form an RING-CH-type zinc finger. Zn(2+) is bound by residues Cys64, Cys67, Cys80, Cys82, His90, Cys93, Cys106, and Cys109. The next 2 helical transmembrane spans lie at 138–158 (LFCDMVCFLFITPLAAISGWL) and 175–195 (AVGLIALTIALFTIYVLWTLV).

Its subcellular location is the endoplasmic reticulum membrane. It is found in the lysosome membrane. The protein localises to the endosome membrane. It catalyses the reaction S-ubiquitinyl-[E2 ubiquitin-conjugating enzyme]-L-cysteine + [acceptor protein]-L-lysine = [E2 ubiquitin-conjugating enzyme]-L-cysteine + N(6)-ubiquitinyl-[acceptor protein]-L-lysine.. It functions in the pathway protein modification; protein ubiquitination. E3 ubiquitin-protein ligase which may be involved in endosomal trafficking. E3 ubiquitin ligases accept ubiquitin from an E2 ubiquitin-conjugating enzyme in the form of a thioester and then directly transfer the ubiquitin to targeted substrates. This is E3 ubiquitin-protein ligase MARCHF2 (marchf2) from Xenopus laevis (African clawed frog).